The primary structure comprises 306 residues: uncharacterized protein (306 aa).

Residues 277-306 (TEIIQNYKIANELKKEKQQNKKKNSIELEE) are a coiled coil.

This is an uncharacterized protein from Saccharolobus islandicus (Sulfolobus islandicus).